The sequence spans 207 residues: MAEHDFETISSETLHTGAIFALRRDQVRMPGGGIVTREVVEHFGAVAIVAMDDNGNIPMVYQYRHTYGRRLWELPAGLLDVAGEPPHLTAARELREEVGLQASTWQVLVDLDTAPGFSDESVRVYLATGLREVGRPEAHHEEADMTMGWYPIAEAARRVLRGEIVNSIAIAGVLAVHAVTTGFAQPRPLDTEWIDRPTAFAARRAER.

Residues 37 to 38 (RE) and R64 contribute to the substrate site. Residues 41–172 (EHFGAVAIVA…EIVNSIAIAG (132 aa)) enclose the Nudix hydrolase domain. A76 contacts Mg(2+). Residues 77-99 (GLLDVAGEPPHLTAARELREEVG) carry the Nudix box motif. L78 contacts substrate. The Mg(2+) site is built by E93 and E97. Substrate is bound by residues 114 to 116 (APG) and E120. Position 142 (E142) interacts with Mg(2+). Residue E142 is the Proton acceptor of the active site.

Belongs to the Nudix hydrolase family. Homodimer. Requires Mg(2+) as cofactor. Mn(2+) serves as cofactor.

It carries out the reaction ADP-D-ribose + H2O = D-ribose 5-phosphate + AMP + 2 H(+). The enzyme catalyses 8-oxo-dGDP + H2O = 8-oxo-dGMP + phosphate + H(+). It catalyses the reaction 8-oxo-GDP + H2O = 8-oxo-GMP + phosphate + H(+). In terms of biological role, catalyzes the hydrolysis of ADP-ribose (ADPR) to AMP and ribose-5-phosphate. Can also hydrolyze ADP-mannose and ADP-glucose, with lower efficiency. Has weaker activity with NAD, GDP-sugars and UDP-sugars. Also catalyzes the conversion of 8-oxo-dGDP to 8-oxo-dGMP, and 8-oxo-GDP to 8-oxo-GMP. Functions in concert with MutT1 to detoxify 8-oxo-dGTP to 8-oxo-dGMP and may play an important role in supporting cellular growth under oxidative stress. The catalytic efficiency is much higher for the hydrolysis of ADPR than 8-oxo-dGTP, suggesting a more relevant biological role in hydrolysis of ADPR. This chain is ADP-ribose pyrophosphatase, found in Mycobacterium tuberculosis (strain ATCC 25618 / H37Rv).